A 411-amino-acid polypeptide reads, in one-letter code: MNFEHISREDNEIYALIEKELERQQNGIELIASENVASEAVMEAMGSYLTNKYAEGYPGKRYYGGCYVVDGVEEIARERAKELFGAEHANVQPHSGSQANMAVYFTILEHGDTVLGMDLSHGGHLTHGSPVNFSGKLFNFVSYGVDKDTEEINYDVVRELAIKHKPKLIVAGASAYSRIIDFKKFREICDEIGAYLMVDMAHIAGLVAAELHPSPVPYADFVTSTTHKTLRGPRGGLILCKEKYAKDLDKNIFPGMQGGPLMHIIAAKAVCFKEALDPSFKEYMARVVENCKELGEQLVKRGFKLVSNGTDNHLILVDLNNKDITGKDAEKLLDEVGITLNKNTVPNETRSPFVTSGVRIGTAAITTRGFERRDMEEIADIINETIINRDKDLEQYKQRVEALCEKYPLYK.

Residues leucine 119 and 123 to 125 (GHL) contribute to the (6S)-5,6,7,8-tetrahydrofolate site. Lysine 228 is subject to N6-(pyridoxal phosphate)lysine. (6S)-5,6,7,8-tetrahydrofolate is bound at residue 351–353 (SPF).

The protein belongs to the SHMT family. In terms of assembly, homodimer. The cofactor is pyridoxal 5'-phosphate.

It is found in the cytoplasm. The catalysed reaction is (6R)-5,10-methylene-5,6,7,8-tetrahydrofolate + glycine + H2O = (6S)-5,6,7,8-tetrahydrofolate + L-serine. Its pathway is one-carbon metabolism; tetrahydrofolate interconversion. It functions in the pathway amino-acid biosynthesis; glycine biosynthesis; glycine from L-serine: step 1/1. Its function is as follows. Catalyzes the reversible interconversion of serine and glycine with tetrahydrofolate (THF) serving as the one-carbon carrier. This reaction serves as the major source of one-carbon groups required for the biosynthesis of purines, thymidylate, methionine, and other important biomolecules. Also exhibits THF-independent aldolase activity toward beta-hydroxyamino acids, producing glycine and aldehydes, via a retro-aldol mechanism. The protein is Serine hydroxymethyltransferase of Clostridium botulinum (strain Eklund 17B / Type B).